The following is a 357-amino-acid chain: Phospho-N-acetylmuramoyl-pentapeptide-transferase (357 aa).

10 helical membrane passes run 23-43 (AIFS…YFIY), 70-90 (TMGG…YCNL), 91-111 (SNIY…IGFI), 127-147 (LKWK…MIKI), 171-191 (YLYI…VNLT), 196-216 (GLAI…SLFS), 236-256 (LAIL…FNSY), 260-280 (VFMG…IAIL), 286-306 (LLII…LQII), and 334-354 (LIIV…LISL).

It belongs to the glycosyltransferase 4 family. MraY subfamily. Requires Mg(2+) as cofactor.

It is found in the cell inner membrane. The enzyme catalyses UDP-N-acetyl-alpha-D-muramoyl-L-alanyl-gamma-D-glutamyl-meso-2,6-diaminopimeloyl-D-alanyl-D-alanine + di-trans,octa-cis-undecaprenyl phosphate = di-trans,octa-cis-undecaprenyl diphospho-N-acetyl-alpha-D-muramoyl-L-alanyl-D-glutamyl-meso-2,6-diaminopimeloyl-D-alanyl-D-alanine + UMP. The protein operates within cell wall biogenesis; peptidoglycan biosynthesis. In terms of biological role, catalyzes the initial step of the lipid cycle reactions in the biosynthesis of the cell wall peptidoglycan: transfers peptidoglycan precursor phospho-MurNAc-pentapeptide from UDP-MurNAc-pentapeptide onto the lipid carrier undecaprenyl phosphate, yielding undecaprenyl-pyrophosphoryl-MurNAc-pentapeptide, known as lipid I. This Buchnera aphidicola subsp. Acyrthosiphon pisum (strain 5A) protein is Phospho-N-acetylmuramoyl-pentapeptide-transferase.